The sequence spans 451 residues: Chromosomal replication initiator protein DnaA (451 aa).

Residues 1-72 form a domain I, interacts with DnaA modulators region; the sequence is MQSIEDIWQE…ANILQEITGR (72 aa). A domain II region spans residues 72–108; it reads RLFDVRFIDGEQEENFEYTVIKPNPALDEDGVEIGKH. The tract at residues 109-325 is domain III, AAA+ region; that stretch reads MLNPRYVFDT…GALIRVVAYS (217 aa). Residues G153, G155, K156, and T157 each coordinate ATP. Residues 326 to 451 are domain IV, binds dsDNA; that stretch reads SLVNKDITAG…KNLRKAQNMF (126 aa).

It belongs to the DnaA family. As to quaternary structure, oligomerizes as a right-handed, spiral filament on DNA at oriC.

It is found in the cytoplasm. Plays an essential role in the initiation and regulation of chromosomal replication. ATP-DnaA binds to the origin of replication (oriC) to initiate formation of the DNA replication initiation complex once per cell cycle. Binds the DnaA box (a 9 base pair repeat at the origin) and separates the double-stranded (ds)DNA. Forms a right-handed helical filament on oriC DNA; dsDNA binds to the exterior of the filament while single-stranded (ss)DNA is stabiized in the filament's interior. The ATP-DnaA-oriC complex binds and stabilizes one strand of the AT-rich DNA unwinding element (DUE), permitting loading of DNA polymerase. After initiation quickly degrades to an ADP-DnaA complex that is not apt for DNA replication. Binds acidic phospholipids. This Listeria monocytogenes serotype 4b (strain CLIP80459) protein is Chromosomal replication initiator protein DnaA.